The primary structure comprises 528 residues: Inorganic phosphate transporter 1-2 (528 aa).

Residues 1 to 24 (MAGSQLNVLVKLDQAKTQWYHFMA) lie on the Cytoplasmic side of the membrane. The chain crosses the membrane as a helical span at residues 25–45 (IVIAGMGFFTDAYDLFCIALV). At 46 to 71 (TKLLGRLYYTDITKPNPGTLPPNVSS) the chain is on the extracellular side. The helical transmembrane segment at 72 to 92 (AVTGVALCGTLAGQLFFGWLG) threads the bilayer. At 93–99 (DKLGRKS) the chain is on the cytoplasmic side. A helical membrane pass occupies residues 100–120 (VYGFTLILMVVCSIASGLSFG). At 121–125 (HTPKS) the chain is on the extracellular side. Residues 126 to 146 (VIATLCFFRFWLGFGIGGDYP) traverse the membrane as a helical segment. Topologically, residues 147-163 (LSATIMSEYASKKTRGA) are cytoplasmic. The chain crosses the membrane as a helical span at residues 164–184 (FIAAVFAMQGFGILFGAIVAL). The Extracellular segment spans residues 185 to 212 (VVSAGFRHAYPAPSYAQNPAASLAPQAD). A helical transmembrane segment spans residues 213-232 (YTWRLILMFGTIPAGLTYYW). Residues 233-296 (RMKMPETARY…RQFMKRHGMH (64 aa)) are Cytoplasmic-facing. Residues 297–317 (LLATTSTWFLLDIAFYSQNLF) form a helical membrane-spanning segment. Topologically, residues 318-348 (QKDIFSKVGWIPPAKTMNALEELYRISRAQA) are extracellular. Residues 349-369 (LIALCGTIPGYWFTVAFIDIV) form a helical membrane-spanning segment. Topologically, residues 370-371 (GR) are cytoplasmic. Residues 372 to 392 (FWIQIMGFFMMTVFMLALGVP) form a helical membrane-spanning segment. The Extracellular segment spans residues 393-405 (YDHWTHPAHHTGF). Residues 406–426 (VVLYALTFFFANFGPNSTTFI) traverse the membrane as a helical segment. Residues 427–442 (VPAEIFPARLRSTCHG) are Cytoplasmic-facing. Residues 443–463 (ISAASGKAGAIIGAFGFLYAA) traverse the membrane as a helical segment. Topologically, residues 464 to 481 (QDQHNPDAGYSRGIGIRN) are extracellular. Residues 482–502 (ALFVLAGTNFLGMLMTLLVPE) traverse the membrane as a helical segment. Residues 503-528 (SKGLSLEEMSKDNVVDETAQEAIAQA) lie on the Cytoplasmic side of the membrane.

This sequence belongs to the major facilitator superfamily. Phosphate:H(+) symporter (TC 2.A.1.9) family. In terms of tissue distribution, expressed in the root stele and leaf phloem and xylem.

The protein resides in the membrane. In terms of biological role, low-affinity transporter for inorganic phosphate (Pi). Involved in internal Pi transport from root to shoot. Responsible for most of the PHR2-mediated accumulation of excess shoot Pi under abundant Pi conditions, but not for PHO2-mediated accumulation of excess shoot Pi. Acts as a H(+):phosphate symporter. The protein is Inorganic phosphate transporter 1-2 (PTH1-2) of Oryza sativa subsp. japonica (Rice).